Consider the following 214-residue polypeptide: Adenylate kinase (214 aa).

10–15 (GAGKGT) is an ATP binding site. An NMP region spans residues 30 to 59 (STGDMLRAAIKAGTELGKQAKAVIDAGQLV). AMP is bound by residues Thr31, Arg36, 57 to 59 (QLV), 85 to 88 (GFPR), and Gln92. The tract at residues 122–159 (GRRAHLPSGRTYHVVYNPPKVEGKDDVTGEDLVVRDDD) is LID. ATP-binding positions include Arg123 and 132–133 (TY). Arg156 and Arg167 together coordinate AMP. Lys200 serves as a coordination point for ATP.

Belongs to the adenylate kinase family. In terms of assembly, monomer.

It is found in the cytoplasm. The enzyme catalyses AMP + ATP = 2 ADP. The protein operates within purine metabolism; AMP biosynthesis via salvage pathway; AMP from ADP: step 1/1. Catalyzes the reversible transfer of the terminal phosphate group between ATP and AMP. Plays an important role in cellular energy homeostasis and in adenine nucleotide metabolism. This is Adenylate kinase from Vibrio vulnificus (strain YJ016).